Here is a 435-residue protein sequence, read N- to C-terminus: Ornithine decarboxylase (435 aa).

An N6-(pyridoxal phosphate)lysine modification is found at Lys98. Residues Ser230, Gly268, and 301-304 (EPGR) each bind pyridoxal 5'-phosphate. 344 to 345 (YD) contacts substrate. The Proton donor; shared with dimeric partner role is filled by Cys380. Asp381 serves as a coordination point for substrate. Tyr409 serves as a coordination point for pyridoxal 5'-phosphate.

Belongs to the Orn/Lys/Arg decarboxylase class-II family. Homodimer. Only the dimer is catalytically active, as the active sites are constructed of residues from both monomers. It depends on pyridoxal 5'-phosphate as a cofactor.

The catalysed reaction is L-ornithine + H(+) = putrescine + CO2. Its pathway is amine and polyamine biosynthesis; putrescine biosynthesis via L-ornithine pathway; putrescine from L-ornithine: step 1/1. With respect to regulation, inhibited by antizyme (AZ) in response to polyamine levels. AZ inhibits the assembly of the functional homodimer by binding to ODC monomers and targeting them for ubiquitin-independent proteolytic destruction by the 26S proteasome. Its function is as follows. Catalyzes the first and rate-limiting step of polyamine biosynthesis that converts ornithine into putrescine, which is the precursor for the polyamines, spermidine and spermine. Polyamines are essential for cell proliferation and are implicated in cellular processes, ranging from DNA replication to apoptosis. The polypeptide is Ornithine decarboxylase (ODC) (Capsicum annuum (Capsicum pepper)).